The sequence spans 343 residues: MLFAMQLACASVLPMVLKSAIELDLLEIIRGQDTCMSPTEIASHLPTTNPDAPAMVDRILRLLSCYSVVTCSVRSVDDQRVYGLAPVCKYLTKNQDGVSIAALCLMNQDKVLMESWYHLKDAVLDGGIPFNKAYGMSSFEYHGTDPRFNKVFNRGMSDHSTITMKKVFQTYQGFQGLTSLVDVGGGTGATLTMILSKYPTIRCINFDLPHVIEDAPEYPGIEHVGGDMFVSVPKGDAIFMKWICHDWSDEHCLKLLKNCYDALPNNGKVILAECILPEVPDSSLATKGVVHIDVITVAHNPGGKERTEKEFEALAKAAGFQGFQVFCNAFNTYIIEFSKKICN.

N107 serves as a coordination point for (E)-ferulate. S-adenosyl-L-homocysteine-binding residues include G184, D207, D227, M228, M240, and K241. Catalysis depends on H245, which acts as the Proton acceptor. D246 is a (E)-5-hydroxyferulate binding site. Active-site residues include E273 and E305.

It belongs to the class I-like SAM-binding methyltransferase superfamily. Cation-independent O-methyltransferase family. COMT subfamily. As to quaternary structure, homodimer.

It carries out the reaction (E)-5-hydroxyferulate + S-adenosyl-L-methionine = (E)-sinapate + S-adenosyl-L-homocysteine + H(+). It catalyses the reaction luteolin + S-adenosyl-L-methionine = chrysoeriol + S-adenosyl-L-homocysteine + H(+). The enzyme catalyses quercetin + S-adenosyl-L-methionine = isorhamnetin + S-adenosyl-L-homocysteine + H(+). The catalysed reaction is (E)-caffeate + S-adenosyl-L-methionine = (E)-ferulate + S-adenosyl-L-homocysteine + H(+). It carries out the reaction a 3'-hydroxyflavone + S-adenosyl-L-methionine = a 3'-methoxyflavone + S-adenosyl-L-homocysteine + H(+). It functions in the pathway flavonoid metabolism. In terms of biological role, catalyzes the 3'-O-methylation of the flavonoids luteolin and quercetin. Catalyzes the 3- of 5-O-methylation of the phenylpropanoids caffeate and 5-hydroxyferulate. Substrate preference is 5-hydroxyferulate &gt; luteolin &gt; quercetin &gt; caffeate. Apigenin, kempferol and 3,4-dimethylquercetin do not seem to be substrates for methylation. The chain is Flavone 3'-O-methyltransferase OMT2 from Chrysosplenium americanum (American golden saxifrage).